The following is a 931-amino-acid chain: Protocadherin gamma-B2 (931 aa).

An N-terminal signal peptide occupies residues 1-30; that stretch reads MKASSGRCGLVRWLQVLLPFLLSLFPGALP. 6 consecutive Cadherin domains span residues 31 to 133, 134 to 242, 243 to 347, 348 to 452, 453 to 562, and 570 to 675; these read VQIR…TPLF, KQTK…PPVF, SQDV…APEV, IVTS…APVF, QQTS…APRV, and DGSA…LPDL. Residues 31-691 lie on the Extracellular side of the membrane; it reads VQIRYSIPEE…SDPQAKLQFY (661 aa). N-linked (GlcNAc...) asparagine glycans are attached at residues Asn419 and Asn545. The helical transmembrane segment at 692 to 712 threads the bilayer; it reads LVVALALISVLFFLAVILAIS. Over 713-931 the chain is Cytoplasmic; sequence LRLRLSSRSD…KKKSGKKEKK (219 aa). Disordered regions lie at residues 814–840 and 901–931; these read DWRFSQAQRPGTSGSQNGDDTGTWPNN and ATLTNAAGKRDGKAPAGGNGNKKKSGKKEKK. A compositionally biased stretch (polar residues) spans 815 to 840; sequence WRFSQAQRPGTSGSQNGDDTGTWPNN. A compositionally biased stretch (basic residues) spans 921–931; sequence NKKKSGKKEKK.

The protein localises to the cell membrane. Potential calcium-dependent cell-adhesion protein. May be involved in the establishment and maintenance of specific neuronal connections in the brain. The protein is Protocadherin gamma-B2 (PCDHGB2) of Homo sapiens (Human).